Reading from the N-terminus, the 309-residue chain is Ribosomal protein L11 methyltransferase (309 aa).

Residues threonine 152, glycine 178, aspartate 200, and asparagine 242 each coordinate S-adenosyl-L-methionine.

It belongs to the methyltransferase superfamily. PrmA family.

The protein resides in the cytoplasm. It carries out the reaction L-lysyl-[protein] + 3 S-adenosyl-L-methionine = N(6),N(6),N(6)-trimethyl-L-lysyl-[protein] + 3 S-adenosyl-L-homocysteine + 3 H(+). Functionally, methylates ribosomal protein L11. In Pelobacter propionicus (strain DSM 2379 / NBRC 103807 / OttBd1), this protein is Ribosomal protein L11 methyltransferase.